A 364-amino-acid polypeptide reads, in one-letter code: Histidinol-phosphate aminotransferase (364 aa).

Residue Lys-226 is modified to N6-(pyridoxal phosphate)lysine.

This sequence belongs to the class-II pyridoxal-phosphate-dependent aminotransferase family. Histidinol-phosphate aminotransferase subfamily. As to quaternary structure, homodimer. Requires pyridoxal 5'-phosphate as cofactor.

The catalysed reaction is L-histidinol phosphate + 2-oxoglutarate = 3-(imidazol-4-yl)-2-oxopropyl phosphate + L-glutamate. Its pathway is amino-acid biosynthesis; L-histidine biosynthesis; L-histidine from 5-phospho-alpha-D-ribose 1-diphosphate: step 7/9. The chain is Histidinol-phosphate aminotransferase from Campylobacter jejuni (strain RM1221).